Reading from the N-terminus, the 269-residue chain is MRYTILSKGDSKSNALKHKMINHMKDFQMVEDPDNPEIVISVGGDGTLLQAFHQYSYMLSRCAFVGIHTGHLGFYADWLPHEVEKLIIEINNSEFQVIEYPLLEIIVRYNDNGYETRHLALNEATMKTENGSTLVVDVNIRGNQFERFRGDGLCISTPSGSTAYNKALGGALIHPSLEAMQIAEIASINNRVFRTVGSPLVLPKHHTCLITPVNQDTILTTIDHVSIKHKNVNAIQYRVANEKIRFARFRPFPFWKRVHDSFISSGDDE.

Residue Asp45 is the Proton acceptor of the active site. Residues 45–46 (DG), 122–123 (NE), Arg149, Asp151, and Ala186 each bind NAD(+).

This sequence belongs to the NAD kinase family. A divalent metal cation serves as cofactor.

Its subcellular location is the cytoplasm. It carries out the reaction NAD(+) + ATP = ADP + NADP(+) + H(+). In terms of biological role, involved in the regulation of the intracellular balance of NAD and NADP, and is a key enzyme in the biosynthesis of NADP. Catalyzes specifically the phosphorylation on 2'-hydroxyl of the adenosine moiety of NAD to yield NADP. The sequence is that of NAD kinase from Staphylococcus saprophyticus subsp. saprophyticus (strain ATCC 15305 / DSM 20229 / NCIMB 8711 / NCTC 7292 / S-41).